A 1460-amino-acid chain; its full sequence is Cilia- and flagella-associated protein 43 (1460 aa).

WD repeat units lie at residues 46–87 (EGRY…HLQC), 91–132 (VATV…RLVK), 184–221 (SKGHYFHSCVWGTEGLYCGAGRGQVVLLDELRTDMKNY), 303–342 (RRRSASDTVKLLVLGGLVVIVCLDGSLVTYDQDTNTAGHT), 428–468 (IFAC…DSAS), 529–569 (MRDH…MKLP), 589–628 (FGRGGITCLSVWNAAGGFVCGGNDSVVHLVPVGKSPIHYS), 911–951 (EIDP…VTEV), and 1129–1170 (NRRF…CRAV). Coiled-coil stretches lie at residues 1170 to 1214 (VVEA…AEEA) and 1399 to 1446 (LGEH…LREA).

This sequence belongs to the CFAP43 family.

The protein resides in the cell projection. Its subcellular location is the cilium. The protein localises to the flagellum. It is found in the cytoplasm. It localises to the cytoskeleton. The protein resides in the flagellum axoneme. Its function is as follows. Flagellar protein involved in flagellum axoneme organization and function. This chain is Cilia- and flagella-associated protein 43, found in Trypanosoma brucei brucei (strain 927/4 GUTat10.1).